The sequence spans 435 residues: Maltodextrin transport system permease protein MdxF (435 aa).

A run of 8 helical transmembrane segments spans residues L35–A55, F73–I93, A136–L156, V199–F219, I234–F254, L293–L313, H337–F357, and V403–F423. The ABC transmembrane type-1 domain occupies L195 to A422.

It belongs to the binding-protein-dependent transport system permease family. MalFG subfamily. In terms of assembly, the complex is composed of two ATP-binding proteins (MsmX), two transmembrane proteins (MdxF and MdxG) and a solute-binding protein (MdxE).

It localises to the cell membrane. Its function is as follows. Part of the ABC transporter complex involved in maltodextrin import. Probably responsible for the translocation of the substrate across the membrane. In Bacillus subtilis (strain 168), this protein is Maltodextrin transport system permease protein MdxF (mdxF).